The following is a 408-amino-acid chain: MSLSVTRENFDEWMVPVYVPAPFIPVRGEGSRLWEQQGKEYIDFAGGIAVNALGHAHPALREALNEQANRFWHTGNGYTNEPALRLAKKLIDATFAERVFFCNSGAEANEAALKLARKYAHDRVGNHKSGIVAFKNAFHGRTLFTVSAGGQPTYSQDFAPLPPDIRHAAYNDLNSASALIDDNTCAVIVEPVQGEGGVIPATKAFLQGLRELCDRHQALLIFDEVQTGVGRTGELYAYMHYGVTPDILTTAKALGGGFPIGAMLTTQDYASVMTPGTHGTTYGGNPLATAVAGKVLDIINTPEMQNGVRQRHDAFIERLNTINVRFGMFSEIRGLGLLLGCVLQTEFAGKAKLIAQEAAKAGVMVLIAGGDVVRFAPALNVSDEEIATGLDRFALACERLQTGGASCG.

Residue K252 is modified to N6-(pyridoxal phosphate)lysine.

Belongs to the class-III pyridoxal-phosphate-dependent aminotransferase family. AstC subfamily. Pyridoxal 5'-phosphate is required as a cofactor.

It carries out the reaction N(2)-succinyl-L-ornithine + 2-oxoglutarate = N-succinyl-L-glutamate 5-semialdehyde + L-glutamate. The protein operates within amino-acid degradation; L-arginine degradation via AST pathway; L-glutamate and succinate from L-arginine: step 3/5. In terms of biological role, catalyzes the transamination of N(2)-succinylornithine and alpha-ketoglutarate into N(2)-succinylglutamate semialdehyde and glutamate. Can also act as an acetylornithine aminotransferase. The chain is Succinylornithine transaminase from Salmonella choleraesuis (strain SC-B67).